The following is a 93-amino-acid chain: Large ribosomal subunit protein uL23 (93 aa).

The protein belongs to the universal ribosomal protein uL23 family. In terms of assembly, part of the 50S ribosomal subunit. Contacts protein L29, and trigger factor when it is bound to the ribosome.

Its function is as follows. One of the early assembly proteins it binds 23S rRNA. One of the proteins that surrounds the polypeptide exit tunnel on the outside of the ribosome. Forms the main docking site for trigger factor binding to the ribosome. The sequence is that of Large ribosomal subunit protein uL23 from Wolinella succinogenes (strain ATCC 29543 / DSM 1740 / CCUG 13145 / JCM 31913 / LMG 7466 / NCTC 11488 / FDC 602W) (Vibrio succinogenes).